Consider the following 591-residue polypeptide: MSDPKIRTPIVCVMGHVDHGKTSLLDRIRGSSVVASEAGAITQHIGATIVPIEAIRKMSGSMEKIPINIPGLLFIDTPGHHAFTTLRARGGALADMAILVVDISQGFQPQTIEALQILRNCKTPFVIAATKVDRIHGWRINKDESFLSSFGKQNERVKTDIETKTYEIVGKLSDLGFSADRYDRVSDFQRNLAIVPVSAHTGEGIADLLMIMIGLAQRYMGEELKLSAEGPGEGTVLEVKEERGLGTTLDVILYNGTLSVGDEIAMASQDDVVTTKVRSLLKPRPMKEILIEDRFERVKSVVAASGIKVSAPGLEKVIAGSPLFVTRGNMDELAARIRKEMQEIHVNLAEEGIVIKADTIGALEALCKELESKEIKVMRAQVGPVSRHDLIDTETIKNPTFRVLLSFNTPILPDAADMIKDPLYTQVKVFSGQVIYQLIDQYVAWRDEQKRIAEKAQFEHVMMPAKIRLLPDCVFRQSNPAVVGVRVLGGKLRADVDLVKTDGKKIGHLKTMQLRQESIKEADAGLEVAISIEGATVGRQLNVGDDLLVDLPERHVKVLEREMLKNLNISTQEVLAEFVAIRRKAEPFWGK.

One can recognise a tr-type G domain in the interval 6 to 220; it reads IRTPIVCVMG…IMIGLAQRYM (215 aa). The segment at 15–22 is G1; the sequence is GHVDHGKT. 15–22 serves as a coordination point for GTP; it reads GHVDHGKT. Positions 40–44 are G2; sequence AITQH. The interval 76 to 79 is G3; it reads DTPG. GTP-binding positions include 76-80 and 130-133; these read DTPGH and TKVD. Positions 130–133 are G4; it reads TKVD. The segment at 198-200 is G5; sequence SAH.

This sequence belongs to the TRAFAC class translation factor GTPase superfamily. Classic translation factor GTPase family. IF-2 subfamily.

Function in general translation initiation by promoting the binding of the formylmethionine-tRNA to ribosomes. Seems to function along with eIF-2. This is Probable translation initiation factor IF-2 from Methanoregula boonei (strain DSM 21154 / JCM 14090 / 6A8).